Here is a 306-residue protein sequence, read N- to C-terminus: Curved DNA-binding protein (306 aa).

A J domain is found at Asp5 to Trp69.

It is found in the cytoplasm. Its subcellular location is the nucleoid. DNA-binding protein that preferentially recognizes a curved DNA sequence. It is probably a functional analog of DnaJ; displays overlapping activities with DnaJ, but functions under different conditions, probably acting as a molecular chaperone in an adaptive response to environmental stresses other than heat shock. Lacks autonomous chaperone activity; binds native substrates and targets them for recognition by DnaK. Its activity is inhibited by the binding of CbpM. In Escherichia fergusonii (strain ATCC 35469 / DSM 13698 / CCUG 18766 / IAM 14443 / JCM 21226 / LMG 7866 / NBRC 102419 / NCTC 12128 / CDC 0568-73), this protein is Curved DNA-binding protein.